A 334-amino-acid chain; its full sequence is Ribosomal RNA small subunit methyltransferase H (334 aa).

S-adenosyl-L-methionine contacts are provided by residues 39 to 41 (GGH), D59, F83, D100, and Q107. The segment at 303-334 (ERTQAHGAERSDMRRAERPDARRAEHGEVLPP) is disordered.

Belongs to the methyltransferase superfamily. RsmH family.

The protein localises to the cytoplasm. The enzyme catalyses cytidine(1402) in 16S rRNA + S-adenosyl-L-methionine = N(4)-methylcytidine(1402) in 16S rRNA + S-adenosyl-L-homocysteine + H(+). In terms of biological role, specifically methylates the N4 position of cytidine in position 1402 (C1402) of 16S rRNA. The chain is Ribosomal RNA small subunit methyltransferase H from Verminephrobacter eiseniae (strain EF01-2).